Reading from the N-terminus, the 92-residue chain is Large ribosomal subunit protein bL27 (92 aa).

Positions 1–9 are excised as a propeptide; sequence MIKANLQLF.

Belongs to the bacterial ribosomal protein bL27 family. In terms of processing, the N-terminus is cleaved by ribosomal processing cysteine protease Prp.

The sequence is that of Large ribosomal subunit protein bL27 from Acetivibrio thermocellus (strain ATCC 27405 / DSM 1237 / JCM 9322 / NBRC 103400 / NCIMB 10682 / NRRL B-4536 / VPI 7372) (Clostridium thermocellum).